The sequence spans 248 residues: tRNA pseudouridine synthase A (248 aa).

The active-site Nucleophile is the D53. Substrate is bound at residue Y111.

The protein belongs to the tRNA pseudouridine synthase TruA family. Homodimer.

The enzyme catalyses uridine(38/39/40) in tRNA = pseudouridine(38/39/40) in tRNA. Functionally, formation of pseudouridine at positions 38, 39 and 40 in the anticodon stem and loop of transfer RNAs. This is tRNA pseudouridine synthase A from Listeria monocytogenes serotype 4a (strain HCC23).